A 249-amino-acid polypeptide reads, in one-letter code: Sugar fermentation stimulation protein homolog (249 aa).

This sequence belongs to the SfsA family.

The protein is Sugar fermentation stimulation protein homolog of Synechococcus sp. (strain RCC307).